The sequence spans 374 residues: Chaperone protein DnaJ (374 aa).

The region spanning 5–70 is the J domain; sequence DYYEVLGVSK…QKRAAYDQYG (66 aa). The segment at 132 to 210 adopts a CR-type zinc-finger fold; that stretch reads GTTVKIRVPT…CHGHGRVEET (79 aa). Zn(2+) contacts are provided by cysteine 145, cysteine 148, cysteine 162, cysteine 165, cysteine 184, cysteine 187, cysteine 198, and cysteine 201. CXXCXGXG motif repeat units lie at residues 145 to 152, 162 to 169, 184 to 191, and 198 to 205; these read CKPCGGSG, CTTCGGHG, CPNCRGQG, and CKECHGHG.

The protein belongs to the DnaJ family. As to quaternary structure, homodimer. It depends on Zn(2+) as a cofactor.

The protein localises to the cytoplasm. Functionally, participates actively in the response to hyperosmotic and heat shock by preventing the aggregation of stress-denatured proteins and by disaggregating proteins, also in an autonomous, DnaK-independent fashion. Unfolded proteins bind initially to DnaJ; upon interaction with the DnaJ-bound protein, DnaK hydrolyzes its bound ATP, resulting in the formation of a stable complex. GrpE releases ADP from DnaK; ATP binding to DnaK triggers the release of the substrate protein, thus completing the reaction cycle. Several rounds of ATP-dependent interactions between DnaJ, DnaK and GrpE are required for fully efficient folding. Also involved, together with DnaK and GrpE, in the DNA replication of plasmids through activation of initiation proteins. The chain is Chaperone protein DnaJ from Saccharophagus degradans (strain 2-40 / ATCC 43961 / DSM 17024).